Here is a 149-residue protein sequence, read N- to C-terminus: 4-hydroxyphenylacetate 3-monooxygenase, reductase component (149 aa).

Glu27 to Ala34 contributes to the FAD binding site. Ser37 lines the NAD(+) pocket. Residues Ala48–Ser50, Lys54–Leu55, and His80 each bind FAD. NAD(+)-binding positions include His116 and Tyr137 to Arg140.

The protein belongs to the non-flavoprotein flavin reductase family. HpaC subfamily. Homodimer. 4-HPA 3-monooxygenase consists of a reductase component HpaC and an oxygenase component HpaB.

The catalysed reaction is a reduced flavin + NAD(+) = an oxidized flavin + NADH + 2 H(+). Its pathway is aromatic compound metabolism; 4-hydroxyphenylacetate degradation; pyruvate and succinate semialdehyde from 4-hydroxyphenylacetate: step 1/7. Its function is as follows. Catalyzes the reduction of free flavins (FMN, FAD and riboflavin) by NADH. Subsequently, the reduced flavins diffuse to the large HpaB component. It utilizes NADH, but not NADPH as an electron donor, and both FAD and FMN as electron acceptors. This chain is 4-hydroxyphenylacetate 3-monooxygenase, reductase component, found in Thermus thermophilus (strain ATCC 27634 / DSM 579 / HB8).